The chain runs to 466 residues: F-box only protein 15 (466 aa).

Residues 27-73 (SASLDSLPSEVLLKILSYLDAAALLCAGCVNRRFYHLANDNFIWIRI) enclose the F-box domain.

Directly interacts with SKP1 and CUL1.

In terms of biological role, substrate-recognition component of the SCF (SKP1-CUL1-F-box protein)-type E3 ubiquitin ligase complex. This Bos taurus (Bovine) protein is F-box only protein 15 (FBXO15).